Consider the following 65-residue polypeptide: Large ribosomal subunit protein bL32 (65 aa).

It belongs to the bacterial ribosomal protein bL32 family.

This is Large ribosomal subunit protein bL32 from Phytoplasma australiense.